The sequence spans 131 residues: U-scoloptoxin-Er5e (131 aa).

Positions 1–22 (MKTNCEFPLLCLLIVLVANVEG) are cleaved as a signal peptide. A propeptide spanning residues 23 to 94 (EVEDNELKMV…KRLWRNWERR (72 aa)) is cleaved from the precursor. 3 RLWRNWE repeats span residues 34-40 (RLWRNWE), 61-67 (RLWRNWE), and 86-92 (RLWRNWE). Glutamine 95 bears the Pyrrolidone carboxylic acid mark. An RLWRNWE 4; approximate repeat occupies 107 to 113 (ELWRNWE). The propeptide occupies 112–131 (WEDLKRRQVVDLNDEQKTTG).

Belongs to the scoloptoxin-08 family. Expressed by the venom gland.

It localises to the secreted. This Ethmostigmus rubripes (Giant centipede) protein is U-scoloptoxin-Er5e.